A 405-amino-acid polypeptide reads, in one-letter code: Putative aminotransferase AatC (405 aa).

Position 238 is an N6-(pyridoxal phosphate)lysine (Lys238).

This sequence belongs to the class-I pyridoxal-phosphate-dependent aminotransferase family. In terms of assembly, homodimer. The cofactor is pyridoxal 5'-phosphate.

Its subcellular location is the cytoplasm. This chain is Putative aminotransferase AatC (aatC), found in Rhizobium meliloti (strain 1021) (Ensifer meliloti).